We begin with the raw amino-acid sequence, 243 residues long: Trypsin (243 aa).

Residues 1–15 (MKFLLLCVLLGAAAA) form the signal peptide. Residues 16–20 (FDDDK) constitute a propeptide, activation peptide. In terms of domain architecture, Peptidase S1 spans 21–241 (IIGGATCAKS…YNAWIQNTIA (221 aa)). Cystine bridges form between cysteine 27–cysteine 157, cysteine 45–cysteine 61, cysteine 129–cysteine 230, cysteine 136–cysteine 203, cysteine 168–cysteine 182, and cysteine 193–cysteine 217. Histidine 60 functions as the Charge relay system in the catalytic mechanism. Ca(2+)-binding residues include glutamate 72, asparagine 74, and glutamate 82. Aspartate 104 serves as the catalytic Charge relay system. Serine 197 acts as the Charge relay system in catalysis.

Belongs to the peptidase S1 family. Requires Ca(2+) as cofactor.

It is found in the secreted. The protein localises to the extracellular space. It carries out the reaction Preferential cleavage: Arg-|-Xaa, Lys-|-Xaa.. The protein is Trypsin of Xenopus laevis (African clawed frog).